The chain runs to 283 residues: MKLAAPNPQALAPLPIDVVSIQSQVVYGQVGNSVAVPVFNGFGLRVAAVPTVVLSNTPHYPSMHGGAVPLDWFEGYLADLGARGALAGVRVVQLGYLGGPAQAEALGRWIAGLVAERPDLRVHIDPVIGDHDSGVYVAPGMVAAYRDHLLSLAQGLTPNGFELECLTGLPTGTMEQTIAAARTLLGGRARWVIVTSAAPATWPPGRVRVAVVTHDDAQVLEHAHVDTAPKGTGDMFGAALTGHRLAGQPVAEAARRAALQVIEALERTREAGCGELLLAGPLR.

Substrate contacts are provided by serine 23 and histidine 59. Aspartate 125 is a binding site for ATP. Tyrosine 136 is a binding site for Mg(2+). ATP contacts are provided by residues threonine 157, glutamate 162, threonine 195, histidine 222–valine 225, and threonine 232. Glutamate 162 contributes to the Mg(2+) binding site. Aspartate 234 is a binding site for substrate.

The protein belongs to the pyridoxine kinase family. PdxK subfamily. In terms of assembly, homodimer. The cofactor is Mg(2+).

It catalyses the reaction pyridoxal + ATP = pyridoxal 5'-phosphate + ADP + H(+). The catalysed reaction is pyridoxine + ATP = pyridoxine 5'-phosphate + ADP + H(+). It carries out the reaction pyridoxamine + ATP = pyridoxamine 5'-phosphate + ADP + H(+). It participates in cofactor metabolism; pyridoxal 5'-phosphate salvage; pyridoxal 5'-phosphate from pyridoxal: step 1/1. It functions in the pathway cofactor metabolism; pyridoxal 5'-phosphate salvage; pyridoxine 5'-phosphate from pyridoxine: step 1/1. Its pathway is cofactor metabolism; pyridoxal 5'-phosphate salvage; pyridoxamine 5'-phosphate from pyridoxamine: step 1/1. B6-vitamer kinase involved in the salvage pathway of pyridoxal 5'-phosphate (PLP). Catalyzes the phosphorylation of pyridoxine (PN), pyridoxal (PL), and pyridoxamine (PM), forming their respective 5'-phosphorylated esters, i.e. PNP, PLP and PMP. This chain is Pyridoxine/pyridoxal/pyridoxamine kinase, found in Bordetella pertussis (strain Tohama I / ATCC BAA-589 / NCTC 13251).